The following is a 139-amino-acid chain: Large-conductance mechanosensitive channel (139 aa).

2 helical membrane-spanning segments follow: residues 19–39 (VAVIIGAAFGAIVSSMVADVI) and 81–101 (GNFLTLTLNFLIVAFVLFMVV).

It belongs to the MscL family. As to quaternary structure, homopentamer.

The protein localises to the cell inner membrane. Its function is as follows. Channel that opens in response to stretch forces in the membrane lipid bilayer. May participate in the regulation of osmotic pressure changes within the cell. The protein is Large-conductance mechanosensitive channel of Nitrobacter hamburgensis (strain DSM 10229 / NCIMB 13809 / X14).